The following is a 67-amino-acid chain: UPF0519 protein C (67 aa).

Residues 18–37 are disordered; sequence KSQANLNSNSTNSPNNVQGL. Residues 22 to 33 are compositionally biased toward low complexity; that stretch reads NLNSNSTNSPNN.

This sequence belongs to the UPF0519 family.

The polypeptide is UPF0519 protein C (Dictyostelium discoideum (Social amoeba)).